Here is a 127-residue protein sequence, read N- to C-terminus: Fluoride-specific ion channel FluC (127 aa).

4 helical membrane passes run 4 to 24 (LLLA…LLSM), 35 to 55 (LGTL…FAWF), 71 to 91 (TGFC…VFLL), and 103 to 123 (VFVN…LFSA). Na(+)-binding residues include Gly-75 and Thr-78.

The protein belongs to the fluoride channel Fluc/FEX (TC 1.A.43) family.

It localises to the cell inner membrane. The enzyme catalyses fluoride(in) = fluoride(out). With respect to regulation, na(+) is not transported, but it plays an essential structural role and its presence is essential for fluoride channel function. Its function is as follows. Fluoride-specific ion channel. Important for reducing fluoride concentration in the cell, thus reducing its toxicity. The sequence is that of Fluoride-specific ion channel FluC from Escherichia coli O7:K1 (strain IAI39 / ExPEC).